The chain runs to 79 residues: Protein OPG081 (79 aa).

Residues 1–8 are Intravirion-facing; the sequence is MVDAITVL. A helical transmembrane segment spans residues 9 to 29; that stretch reads TAIGITVLMLLMVISGAAMIV. Residues 30-47 lie on the Virion surface side of the membrane; sequence KELNPNDIFTMQSLKFNR. A helical transmembrane segment spans residues 48 to 68; it reads AVTIFKYIGLFIYIPGTIILY. Topologically, residues 69 to 79 are intravirion; the sequence is ATYVKSLLMKS.

Belongs to the orthopoxvirus OPG081 family.

It localises to the virion membrane. In terms of biological role, envelope protein. The protein is Protein OPG081 (OPG081) of Vaccinia virus (strain Copenhagen) (VACV).